The following is a 378-amino-acid chain: Mannitol-1-phosphate 5-dehydrogenase (378 aa).

4–15 (SVHFGAGNIGRG) contacts NAD(+).

The protein belongs to the mannitol dehydrogenase family.

It catalyses the reaction D-mannitol 1-phosphate + NAD(+) = beta-D-fructose 6-phosphate + NADH + H(+). The chain is Mannitol-1-phosphate 5-dehydrogenase from Streptococcus pneumoniae (strain 70585).